A 266-amino-acid polypeptide reads, in one-letter code: Undecaprenyl-diphosphatase (266 aa).

The next 8 helical transmembrane spans lie at 1–21, 39–59, 87–107, 111–131, 144–164, 183–203, 218–238, and 244–264; these read METF…FLPI, QGLS…VIYF, WWII…KDFI, FRNT…LWAA, MGWK…IPGT, AAAR…ALLV, ALGL…HFFL, and IGMT…LGLL.

Belongs to the UppP family.

It localises to the cell inner membrane. It catalyses the reaction di-trans,octa-cis-undecaprenyl diphosphate + H2O = di-trans,octa-cis-undecaprenyl phosphate + phosphate + H(+). In terms of biological role, catalyzes the dephosphorylation of undecaprenyl diphosphate (UPP). Confers resistance to bacitracin. The chain is Undecaprenyl-diphosphatase from Shewanella frigidimarina (strain NCIMB 400).